We begin with the raw amino-acid sequence, 129 residues long: D-ribose pyranase (129 aa).

Residue His20 is the Proton donor of the active site. Residues Asp28, His96, and 118 to 120 (YAN) each bind substrate.

Belongs to the RbsD / FucU family. RbsD subfamily. Homodecamer.

The protein localises to the cytoplasm. The enzyme catalyses beta-D-ribopyranose = beta-D-ribofuranose. The protein operates within carbohydrate metabolism; D-ribose degradation; D-ribose 5-phosphate from beta-D-ribopyranose: step 1/2. In terms of biological role, catalyzes the interconversion of beta-pyran and beta-furan forms of D-ribose. The protein is D-ribose pyranase of Exiguobacterium sp. (strain ATCC BAA-1283 / AT1b).